A 273-amino-acid polypeptide reads, in one-letter code: Dermonecrotic toxin LapSicTox-alphaIB2 (273 aa).

The active site involves His5. Mg(2+) contacts are provided by Glu25 and Asp27. The active-site Nucleophile is His41. Intrachain disulfides connect Cys45–Cys51 and Cys47–Cys190. Residue Asp85 coordinates Mg(2+). Asn250 carries an N-linked (GlcNAc...) asparagine glycan.

This sequence belongs to the arthropod phospholipase D family. Class II subfamily. Mg(2+) serves as cofactor. In terms of tissue distribution, expressed by the venom gland.

It is found in the secreted. It carries out the reaction an N-(acyl)-sphingosylphosphocholine = an N-(acyl)-sphingosyl-1,3-cyclic phosphate + choline. The enzyme catalyses an N-(acyl)-sphingosylphosphoethanolamine = an N-(acyl)-sphingosyl-1,3-cyclic phosphate + ethanolamine. It catalyses the reaction a 1-acyl-sn-glycero-3-phosphocholine = a 1-acyl-sn-glycero-2,3-cyclic phosphate + choline. The catalysed reaction is a 1-acyl-sn-glycero-3-phosphoethanolamine = a 1-acyl-sn-glycero-2,3-cyclic phosphate + ethanolamine. Its function is as follows. Dermonecrotic toxins cleave the phosphodiester linkage between the phosphate and headgroup of certain phospholipids (sphingolipid and lysolipid substrates), forming an alcohol (often choline) and a cyclic phosphate. This toxin acts on sphingomyelin (SM). It may also act on ceramide phosphoethanolamine (CPE), lysophosphatidylcholine (LPC) and lysophosphatidylethanolamine (LPE), but not on lysophosphatidylserine (LPS), and lysophosphatidylglycerol (LPG). It acts by transphosphatidylation, releasing exclusively cyclic phosphate products as second products. Induces dermonecrosis, hemolysis, increased vascular permeability, edema, inflammatory response, and platelet aggregation. The chain is Dermonecrotic toxin LapSicTox-alphaIB2 from Loxosceles apachea (Apache recluse spider).